The sequence spans 37 residues: Large ribosomal subunit protein bL36 (37 aa).

The protein belongs to the bacterial ribosomal protein bL36 family.

The protein is Large ribosomal subunit protein bL36 of Tropheryma whipplei (strain Twist) (Whipple's bacillus).